A 215-amino-acid chain; its full sequence is Beta-crystallin A3-1 (215 aa).

Positions 1–30 (MEIPVDQTEREDITSEKMAQINPLPVHLGP) are N-terminal arm. 2 Beta/gamma crystallin 'Greek key' domains span residues 31–70 (WKIT…KVEC) and 71–117 (GAWI…RPIC). Positions 118 to 123 (SANHIE) are connecting peptide. 2 Beta/gamma crystallin 'Greek key' domains span residues 124–165 (SKLV…KVQC) and 166–214 (GAWV…RRIQ).

Belongs to the beta/gamma-crystallin family. As to quaternary structure, homo/heterodimer, or complexes of higher-order. The structure of beta-crystallin oligomers seems to be stabilized through interactions between the N-terminal arms. Post-translationally, the N-terminus is blocked.

Functionally, crystallins are the dominant structural components of the vertebrate eye lens. The chain is Beta-crystallin A3-1 from Aquarana catesbeiana (American bullfrog).